A 222-amino-acid chain; its full sequence is MAIIMAESSYERRVKALYEKQIRMEALEAKFIKKVYKFNSNLLDVKEAACRHQRKVGKLQKVLMERREELDKRVSFIEELDRELEATKLRDLAMKDRIKQQKMLARQRKNEIMESIHTLSKTTGTYINQDALPARVKGVTVLRGDKRNQLIPFDLKSTDVEGLDSLCQHLESLNVDMAQWQQLISLAMDVAMESRAPTTPPKEATNCNSIIEIDLTSPTCHI.

Residues 51–86 (RHQRKVGKLQKVLMERREELDKRVSFIEELDRELEA) adopt a coiled-coil conformation.

Belongs to the SPC25 family. As to quaternary structure, component of the Ndc80 complex, which is composed of Ndc80, Nuf2 and Spc25.

It is found in the nucleus. The protein resides in the chromosome. The protein localises to the centromere. It localises to the kinetochore. In terms of biological role, acts as a component of the essential kinetochore-associated Ndc80 complex, which is required for chromosome segregation and spindle checkpoint activity during meiosis and mitosis. Required for kinetochore integrity and the organization of stable microtubule binding sites in the outer plate of the kinetochore. Participates in SAC signaling that responds specifically to disruptions in spindle microtubule dynamics. The NDC80 complex synergistically enhances the affinity of the SKA1 complex for microtubules and may allow the NDC80 complex to track depolymerizing microtubules. In Drosophila mauritiana (Fruit fly), this protein is Kinetochore protein Spc25.